The following is a 1697-amino-acid chain: MDEFTSDSLTTSRLLRQISHSDSLSSVGSSSNRSNSNYENKINNGIINDFDSTNANDGISNNSNNSNNNNNSSSILKIHQSPQSILSTEQQHQIQQYQQYHQQQIYESGYVPPHVYIFDPDYKSNNDEEDKEKRSLIELNKSTDLSNIKTTTTTTTTTTPPPLMIPENEEENKQLRQEILNELSKSESFTKIKEPGEIYGFCECSLLYNHLTCANLVITSNYLIFLPQQQVDSDYVLENYLYKKGDFFWKKYWFVLTPDSISWYKSSILKETHYPNGTILLSKIVTVDKLDPEETGKPFCLQIMTNTSIHLIQLDTEPQLEHWYHEINRMQKNLNVTIPIGDIVSITMESNAALFFDSLCLTLKKGENCLVTPSSSSNEVYSLLIKLWNRNRGVTVVEPEKQQRLLEFQKTFKLSQGVNLLIETPCVFYQDEEFSYEGVLYATTEGTLYFSSLDSVLIIPESDIYAITIDRKSDNRDALKVYTTDYDVLFFDSIDDIETFFNVISTSLARSNPKIFFSTVGQIPPIDEPKHDEKEHKSTYQTISSGIRSWKIPIPSLPNFSIPIPKSIPIPLFRSKSSSHLDPQNSQQQQQQQQQSSSLQLDDNNNNIVIPHTSNPTTIIPSTSSSSAIPPPPSSTSSTSSTTHEKTIIIQKNSSINSTFHDIFPLLPLDETVIMFQNCSLYYYSYDSNVEGIVYITKSYIAFNPSPLDKQQQQQQQQQQQQPNSSSITSTTYDRDLDTDSDTDSESDFDYPKQSQHDNSVVMVNNNQYKVKEVLMKKALIPIEDIVSVTKERFLLFFNQCVKIITLDHKWIFGSLNNINSFYNLILETWKQIPKTLLDSSSSSSSSSSSSLLSSSPNNNNSDLNINGNSEGSIFTPLESIKIKNKLGLPADEVLITWFNCTNFKGAQLKYGFLYISNNNICFRSKFGFQKRTIVIPLSQVIEIKKYSAFIPNGIKITTASHHEFQFASFIHRNRVYQILYETWLKANNKKSNSSNSLSSSPTITSPLAISPSIASPSITPPSSTPPSSTTPSSTTPTITSPTIHSTLPSTVVYNDIQEIIDGENNSNNNNNNNNTNNTNKSNSFIGNVEEDVDKIKRSIKSLPILKIHSAQQQQQQQPKTTTTTTSTTTTNLISPRLLTPLTITQSPGFSSLVNSPILPVKPLRITILTIGSRGDIQPFIALSLGLKEYGHNVTLATHELYRDLISKEFGLNYQPLGGDPRELMDLCVRNGIFTPKFIKEALSRFRSFIDDLLLTCWKAVQNSNTQVLIATPGCFAGPHIGEVLQIPFFNAFTMPFTRTRTYPNPFAPFASHQMGGVFNLATHVMMEKVLWQPISGQINQWRTETLKIPPWNSSVSINETYRMPYLYCFSKYLVPKPPDWSGEIAITGYWTLKNQANSDSPPDDLIQFLNEESSTENDDIPIYIGFGSIVIDNPTALSLLLIEAIKLSGKRAIISQGWGGLSIDEHNNNNNNNNNNNNGENSDSNKSSLQSNRIYLLKKPVDHSWLFEKVSLVISHGGAGTVAASLLAAKPTIVVPFFGDQFFWGERIKQTGIGTSIPFDILTAKSLSSHIISILNEPSVRAKVNKMSHLLKREDGVKTAIDFIHRYLPFSFIPPREIPFSSAPNSCMGCKQPFTLLHVMKARVHCHCCGKIFCESCTSHKCPIKKYRINTPVRVCDKCFNDLQSNPSSNSFILND.

Disordered stretches follow at residues 20–40 (HSDSLSSVGSSSNRSNSNYEN) and 142–166 (STDLSNIKTTTTTTTTTTPPPLMIP). Positions 234–332 (DYVLENYLYK…WYHEINRMQK (99 aa)) constitute a PH domain. Disordered regions lie at residues 573-645 (FRSK…TTHE) and 707-756 (PLDK…KQSQ). Low complexity-rich tracts occupy residues 584 to 628 (QNSQ…SSSA) and 711 to 722 (QQQQQQQQQQQQ). GRAM domains lie at 658–793 (STFH…TKER) and 881–948 (IKIK…KKYS). The segment covering 739–749 (TDSDTDSESDF) has biased composition (acidic residues). 4 disordered regions span residues 1011–1047 (SPSIASPSITPPSSTPPSSTTPSSTTPTITSPTIHST), 1062–1085 (DGENNSNNNNNNNNTNNTNKSNSF), 1110–1130 (SAQQQQQQQPKTTTTTTSTTT), and 1466–1488 (EHNNNNNNNNNNNNGENSDSNKS). Low complexity-rich tracts occupy residues 1026–1047 (PPSSTTPSSTTPTITSPTIHST), 1065–1084 (NNSNNNNNNNNTNNTNKSNS), 1112–1130 (QQQQQQQPKTTTTTTSTTT), and 1469–1479 (NNNNNNNNNNN). The segment at 1622–1685 (SSAPNSCMGC…VCDKCFNDLQ (64 aa)) adopts an FYVE-type zinc-finger fold. Positions 1628, 1631, 1647, 1650, 1655, 1658, 1677, and 1680 each coordinate Zn(2+).

This sequence belongs to the glycosyltransferase 28 family.

It carries out the reaction a sterol + UDP-alpha-D-glucose = a sterol 3-beta-D-glucoside + UDP + H(+). In terms of biological role, involved in the biosynthesis of sterol glucoside. Can use different sterols such as cholesterol, sitosterol, and ergosterol as sugar acceptors. This is UDP-sugar-dependent glycosyltransferase 52 (ugt52) from Dictyostelium discoideum (Social amoeba).